Consider the following 164-residue polypeptide: Axial regulator YABBY 5 (164 aa).

The C4-type zinc-finger motif lies at 16–43 (CNFCNIILAVNVPCSSLFDIVTVRCGHC).

The protein belongs to the YABBY family. As to quaternary structure, binds to LUG and LUH; these complexes promote adaxial cell identity in leaves as well as embryonic shoot apical meristem (SAM) initiation and postembryonic SAM maintenance. Interacts with SPL/NZZ and SPEAR2.

It localises to the nucleus. Functionally, promotes adaxial cell identity. Regulates the initiation of embryonic shoot apical meristem (SAM) development. This Arabidopsis thaliana (Mouse-ear cress) protein is Axial regulator YABBY 5 (YAB5).